Reading from the N-terminus, the 578-residue chain is GPI-anchor transamidase component PIGT (578 aa).

An N-terminal signal peptide occupies residues 1-21 (MAAAMPLALLVLLLLGPGGWC). The Lumenal segment spans residues 22 to 525 (LAEPPRDSLR…NLPTPDFSMP (504 aa)). N-linked (GlcNAc...) asparagine glycosylation occurs at N164. 2 disulfides stabilise this stretch: C195-C272 and C226-C231. N-linked (GlcNAc...) asparagine glycosylation is found at N291 and N327. Residues N461, D521, S523, and N527 each contribute to the a 2-acyl-6-[6-phosphoethanolamine-alpha-D-mannosyl-(1-&gt;2)-6-phosphoethanolamine-alpha-D-mannosyl-(1-&gt;6)-2-phosphoethanolamine-alpha-D-mannosyl-(1-&gt;4)-alpha-D-glucosaminyl]-1-(1-radyl,2-acyl-sn-glycero-3-phospho)-1D-myo-inositol site. The helical transmembrane segment at 526–548 (YNVICLTCTVVAVCYGSFYNLLT) threads the bilayer. At 549 to 578 (RTFHIEEPRTGGLAKRLANLIRRARGVPPL) the chain is on the cytoplasmic side.

The protein belongs to the PIGT family. Heteropentamer. Part of the GPI-anchor transamidase complex, consisting of PIGK, PIGT, PIGS, PIGU and GAA1. Post-translationally, the disulfide bond between PIGK/GPI8 and PIGT is important for normal enzyme activity.

The protein resides in the endoplasmic reticulum membrane. Its pathway is glycolipid biosynthesis; glycosylphosphatidylinositol-anchor biosynthesis. Functionally, component of the glycosylphosphatidylinositol-anchor (GPI-anchor) transamidase (GPI-T) complex that catalyzes the formation of the linkage between a proprotein and a GPI-anchor and participates in GPI anchored protein biosynthesis. May play a crucial role in GPI-T complex assembly in the luminal layer. Binds GPI-anchor. The polypeptide is GPI-anchor transamidase component PIGT (Homo sapiens (Human)).